The chain runs to 359 residues: 3-dehydroquinate synthase (359 aa).

NAD(+) contacts are provided by residues 71–76 (DGEQFK), 105–109 (GVIGD), 129–130 (TT), Lys142, Lys151, and 169–172 (CLHT). Zn(2+) is bound by residues Glu184, His247, and His264.

Belongs to the sugar phosphate cyclases superfamily. Dehydroquinate synthase family. The cofactor is Co(2+). Requires Zn(2+) as cofactor. It depends on NAD(+) as a cofactor.

It is found in the cytoplasm. It catalyses the reaction 7-phospho-2-dehydro-3-deoxy-D-arabino-heptonate = 3-dehydroquinate + phosphate. It participates in metabolic intermediate biosynthesis; chorismate biosynthesis; chorismate from D-erythrose 4-phosphate and phosphoenolpyruvate: step 2/7. Functionally, catalyzes the conversion of 3-deoxy-D-arabino-heptulosonate 7-phosphate (DAHP) to dehydroquinate (DHQ). The protein is 3-dehydroquinate synthase of Shewanella sp. (strain W3-18-1).